We begin with the raw amino-acid sequence, 342 residues long: Deoxyguanosinetriphosphate triphosphohydrolase-like protein (342 aa).

The region spanning 75–190 is the HD domain; it reads RLVHTLEVSQ…VRFADKIAYV (116 aa).

The protein belongs to the dGTPase family. Type 2 subfamily.

The sequence is that of Deoxyguanosinetriphosphate triphosphohydrolase-like protein from Clostridium perfringens (strain SM101 / Type A).